We begin with the raw amino-acid sequence, 463 residues long: Ammonium transporter 1 (463 aa).

Residues 1-39 are Extracellular-facing; sequence MVAGEIIKGVAAEITNGSSSSVVQKYLDCANQVAPDPGN. Residues 40 to 60 traverse the membrane as a helical segment; it reads TTWVLLSTILVLGMMPALAFF. Topologically, residues 61–76 are cytoplasmic; sequence EAGLLRSKNTLSIITQ. A helical membrane pass occupies residues 77–97; the sequence is IMSGIVVLTVMWQAFGYSLTF. At 98–127 the chain is on the extracellular side; the sequence is GPDQKGIIGNLDHAFLINVSYDDCSPNAPN. A helical transmembrane segment spans residues 128-148; the sequence is IPAAAYAFFMMMFANITPLLM. The Cytoplasmic portion of the chain corresponds to 149–160; it reads TGAFAERVKFKA. Residues 161–181 traverse the membrane as a helical segment; sequence FIALTVAWEIIVFYPVAHWIW. Over 182–194 the chain is Extracellular; that stretch reads GGGWLHKYFGVLD. Residues 195–215 traverse the membrane as a helical segment; sequence FAGGIVIHTSAGVSALVIALY. Residues 216–233 are Cytoplasmic-facing; that stretch reads VGRRKDFEKYGGEFPPSN. Residues 234 to 254 form a helical membrane-spanning segment; the sequence is LPLATIGAALLWMGWFGFNAG. The Extracellular portion of the chain corresponds to 255–265; that stretch reads SALAAGNIATS. A helical transmembrane segment spans residues 266–286; that stretch reads AVASTQIGGSFSAIVWIILSA. The Cytoplasmic portion of the chain corresponds to 287–293; it reads AKGKPNT. Residues 294 to 314 form a helical membrane-spanning segment; the sequence is VSVINGVIAGLAGITPASGYI. Residues 315–316 are Extracellular-facing; the sequence is NS. A helical membrane pass occupies residues 317-337; that stretch reads QYSIGLGICLGLASYYSVVLL. The Cytoplasmic segment spans residues 338–351; that stretch reads KHKLHIDDALDVSS. A helical transmembrane segment spans residues 352 to 372; sequence VHGLTGIIGSLAIGFCAELSV. The Extracellular segment spans residues 373–392; the sequence is NPNGANGAFYGNPKLIGTQL. The chain crosses the membrane as a helical span at residues 393–413; sequence LGVVSVAVWAAAWTWVLLKII. Residues 414–463 are Cytoplasmic-facing; the sequence is DATIGVKIDESEEELGLDLVEHGEFAYHNISLQGNENHYSSVINSHDFFK.

The protein belongs to the ammonia transporter channel (TC 1.A.11.2) family.

The protein resides in the cell membrane. It localises to the endosome membrane. The protein localises to the lysosome membrane. Its subcellular location is the cytoplasmic vesicle. It is found in the phagosome membrane. Functionally, ammonium transporter that mediates the excretion of ammonium. Controls ammonium homeostasis during growth and development. Ammonium has been shown to function as a morphogen at multiple steps during the development. The protein is Ammonium transporter 1 (amtA) of Dictyostelium discoideum (Social amoeba).